Reading from the N-terminus, the 735-residue chain is Polycomb protein sop-2 (735 aa).

Polar residues predominate over residues M1 to A15. Disordered regions lie at residues M1 to S59, A223 to A288, and P300 to Q534. Positions A224–S503 are RNA-binding. Residues Y239–A288 show a composition bias toward low complexity. 2 stretches are compositionally biased toward basic and acidic residues: residues D317–R355 and R389–D398. Positions S399 to N413 are enriched in acidic residues. Basic and acidic residues predominate over residues V450–A470. Over residues A471–S504 the composition is skewed to low complexity. Residues L520–Q534 are compositionally biased toward polar residues. The SAM-like stretch occupies residues L621–R712.

As to quaternary structure, homodimer. Interacts with ubc-9. Binds through its N-terminal region to the N-terminal region of sor-1. In terms of processing, sumoylated by ubc-9. Sumoylation is required for the transcriptional regulation of homeotic genes. Widely expressed. Weakly expressed in most somatic cells of 50-cell stage embryos. At 200 cell stage, it is strongly expressed. By comma stage, it is expressed in most somatic cells.

The protein resides in the nucleus. In terms of biological role, polycomb group (PcG) protein. PcG proteins act by forming multiprotein complexes, which are required to maintain the transcriptionally repressive state of homeotic genes throughout development. PcG proteins are not required to initiate repression, but to maintain it during later stages of development. Also required to repress expression of other genes and for localization of sor-1. Binds RNA. The polypeptide is Polycomb protein sop-2 (sop-2) (Caenorhabditis elegans).